The sequence spans 365 residues: Cobalt-precorrin-5B C(1)-methyltransferase (365 aa).

This sequence belongs to the CbiD family.

It catalyses the reaction Co-precorrin-5B + S-adenosyl-L-methionine = Co-precorrin-6A + S-adenosyl-L-homocysteine. Its pathway is cofactor biosynthesis; adenosylcobalamin biosynthesis; cob(II)yrinate a,c-diamide from sirohydrochlorin (anaerobic route): step 6/10. In terms of biological role, catalyzes the methylation of C-1 in cobalt-precorrin-5B to form cobalt-precorrin-6A. The sequence is that of Cobalt-precorrin-5B C(1)-methyltransferase from Pseudomonas fluorescens (strain Pf0-1).